We begin with the raw amino-acid sequence, 42 residues long: Pelovaterin (42 aa).

Disulfide bonds link cysteine 8–cysteine 38, cysteine 16–cysteine 32, and cysteine 24–cysteine 39.

Its subcellular location is the secreted. The protein resides in the extracellular space. It localises to the extracellular matrix. In terms of biological role, induces the nucleation and stabilization of vaterite, one of the crystalline polymorphs of calcium carbonate. Exhibits strong antimicrobial activity against Pseudomonas aeruginosa and Proteus vulgaris. The sequence is that of Pelovaterin from Pelodiscus sinensis (Chinese softshell turtle).